Consider the following 254-residue polypeptide: Phytolongin Phyl1.1 (254 aa).

The region spanning 12 to 113 (CVSRDNQILY…TAMIGSINVE (102 aa)) is the Longin domain. The disordered stretch occupies residues 138–173 (ELKSSNLGEQSEGSNSTKAPLLGRLSKQEKKKGKDH). The span at 145–155 (GEQSEGSNSTK) shows a compositional bias: polar residues. Residues 226–246 (IVLAIDAAICLTLFGIWLAIC) traverse the membrane as a helical; Anchor for type IV membrane protein segment.

This sequence belongs to the synaptobrevin family.

The protein resides in the membrane. Non-SNARE longin protein involved in membrane-trafficking machinery. The polypeptide is Phytolongin Phyl1.1 (Arabidopsis thaliana (Mouse-ear cress)).